The primary structure comprises 811 residues: MKAIFALRQAVASQLKKSTASSHPLPRTTASTSQDETIWQKIHRSRFVRIAHPPVMLGITVVSLTGVVGYRFYNQPQLSVGTESPYTIYAPEDGSFVDERTTEEKRKEVRAGTIPRLQRDNELTAQLKQERSQYLDAINQLRYLAGTFPYIDTKIFTLEQQHLLRSLGPGEWQQLEDYISYGQPLPMASPQLAKLQQLFDQQKATTSPETMAGLLTSIRTAQDRYGRVTARLAEVKADRQITNNQIGALKLDGPTWQTTQQTIIQVHDRILTQGLPAGITAPLLGETVQLHLRNILPPQAHQVAENSLNNLLKDKYNLTVDKEATKNLAEKAVLAMENVKVSAEKNSVIVRAGEVITQEQFVLLDGYGLSQRQVNWQGLLRTAGLVGGALIIFCGVSRRIHRPLRRRDHILLCLLSVSTPVLFLLDPVYNNLPAISLLTSSFYGPTLAITQVVLVGGLSAFAMESIVWEYLLGSAAAALLAGMIASKLRSRDELALLGVGVGATQGIVYLFTYLIVNASAVTIIWYTALPSAIVYGLLGLAWSAMAIGVSPYLERLFDVVTPTRLVELSNPNCPLLQRLAKEAPGTFQHTLFVACLAESAARELRCNVELVRTGTLYHDIGKMHDPLGFIENQMGGPNKHDEINDPYVSVDIIKKHVSEGLVMARRYGLPQVVRDFIPEHQGQMLISYFYIQAKEAAERAGEPPVNEEEFRYTGPIPQSRETGIVMLADSCEAALRSLREANPETAMAMVNRIFKARWRDNQLQDSGLKYEELPIIADVFVRVWQQFHHQRIAYPKAALDVQVTSPSTTRF.

The tract at residues 16–35 (KKSTASSHPLPRTTASTSQD) is disordered. The next 7 membrane-spanning stretches (helical) occupy residues 50-70 (IAHP…VVGY), 376-396 (WQGL…FCGV), 409-429 (HILL…DPVY), 442-462 (FYGP…SAFA), 466-486 (IVWE…MIAS), 496-516 (LLGV…YLIV), and 529-549 (LPSA…AIGV). The HD domain maps to 586-734 (TFQHTLFVAC…VMLADSCEAA (149 aa)).

It localises to the cell membrane. This is an uncharacterized protein from Synechocystis sp. (strain ATCC 27184 / PCC 6803 / Kazusa).